The sequence spans 1198 residues: Structural polyprotein (1198 aa).

Residues 2-15 are interaction with host EXOC1; sequence TKKPGGPGKNRAIN. A hydrophobic; homodimerization of capsid protein C region spans residues 37 to 72; that stretch reads LLDGRGPVRFVLALITFFKFTALAPTKALLGRWKAV. Positions 106–127 are cleaved as a propeptide — ER anchor for the capsid protein C, removed in mature form by serine protease NS3; sequence GGNEGSIMWLASLAVVIACAGA. The chain crosses the membrane as a helical span at residues 110 to 130; it reads GSIMWLASLAVVIACAGAMKL. Residue asparagine 142 is glycosylated (N-linked (GlcNAc...) asparagine; by host). Transmembrane regions (helical) follow at residues 254–274 and 280–294; these read WIIR…MLGS and VVFT…PAYS. Cystine bridges form between cysteine 297-cysteine 324, cysteine 354-cysteine 410, cysteine 354-cysteine 415, cysteine 368-cysteine 399, cysteine 386-cysteine 410, and cysteine 386-cysteine 415. The tract at residues 392-405 is fusion peptide; it reads DRGWGNGCGLFGKG. Asparagine 448 is a glycosylation site (N-linked (GlcNAc...) asparagine; by host). Disulfide bonds link cysteine 484-cysteine 581 and cysteine 598-cysteine 629. Transmembrane regions (helical) follow at residues 747–767 and 774–794; these read FGGM…WMGV and IALA…NVHA. 6 disulfide bridges follow: cysteine 798/cysteine 809, cysteine 849/cysteine 937, cysteine 973/cysteine 1017, cysteine 1074/cysteine 1123, cysteine 1085/cysteine 1106, and cysteine 1107/cysteine 1110. N-linked (GlcNAc...) asparagine; by host glycans are attached at residues asparagine 924 and asparagine 1001. The disordered stretch occupies residues 1151–1177; it reads MVDPFSAGPSGDVSGHPGSPSQEVDGQ.

As to quaternary structure, homodimer. Interacts (via N-terminus) with host EXOC1 (via C-terminus); this interaction results in EXOC1 degradation through the proteasome degradation pathway. Interacts with host CAPRIN1; this interaction is involved in the suppression of the integrated stress response. In terms of assembly, forms heterodimers with envelope protein E in the endoplasmic reticulum and Golgi. Homodimer; in the endoplasmic reticulum and Golgi. Interacts with protein prM. Interacts with non-structural protein 1. Genome polyprotein: Specific enzymatic cleavages in vivo yield mature proteins. Cleavages in the lumen of endoplasmic reticulum are performed by host signal peptidase, whereas cleavages in the cytoplasmic side are performed by serine protease NS3. Signal cleavage at the 2K-4B site requires a prior NS3 protease-mediated cleavage at the 4A-2K site. Post-translationally, cleaved in post-Golgi vesicles by a host furin, releasing the mature small envelope protein M, and peptide pr. This cleavage is incomplete as up to 30% of viral particles still carry uncleaved prM. In terms of processing, N-glycosylated.

The protein resides in the secreted. The protein localises to the virion membrane. Its subcellular location is the host endoplasmic reticulum membrane. Functionally, plays a role in virus budding by binding to the cell membrane and gathering the viral RNA into a nucleocapsid that forms the core of a mature virus particle. During virus entry, may induce genome penetration into the host cytoplasm after hemifusion induced by the surface proteins. Can migrate to the cell nucleus where it modulates host functions. Overcomes the anti-viral effects of host EXOC1 by sequestering and degrading the latter through the proteasome degradation pathway. Inhibits the integrated stress response (ISR) in the infected cell by binding to host CAPRIN1. Its function is as follows. Inhibits RNA silencing by interfering with host Dicer. In terms of biological role, prevents premature fusion activity of envelope proteins in trans-Golgi by binding to envelope protein E at pH6.0. After virion release in extracellular space, gets dissociated from E dimers. Acts as a chaperone for envelope protein E during intracellular virion assembly by masking and inactivating envelope protein E fusion peptide. prM is the only viral peptide matured by host furin in the trans-Golgi network probably to avoid catastrophic activation of the viral fusion activity in acidic Golgi compartment prior to virion release. prM-E cleavage is inefficient, and many virions are only partially matured. These uncleaved prM would play a role in immune evasion. Functionally, may play a role in virus budding. Exerts cytotoxic effects by activating a mitochondrial apoptotic pathway through M ectodomain. May display a viroporin activity. Its function is as follows. Binds to host cell surface receptor and mediates fusion between viral and cellular membranes. Envelope protein is synthesized in the endoplasmic reticulum in the form of heterodimer with protein prM. They play a role in virion budding in the ER, and the newly formed immature particle is covered with 60 spikes composed of heterodimer between precursor prM and envelope protein E. The virion is transported to the Golgi apparatus where the low pH causes dissociation of PrM-E heterodimers and formation of E homodimers. prM-E cleavage is inefficient, and many virions are only partially matured. These uncleaved prM would play a role in immune evasion. In terms of biological role, may play a role in neuroinvasiveness. This Ardeidae (herons) protein is Structural polyprotein.